A 220-amino-acid polypeptide reads, in one-letter code: Large ribosomal subunit protein bL21c (220 aa).

It belongs to the bacterial ribosomal protein bL21 family. In terms of assembly, part of the 50S ribosomal subunit.

It is found in the plastid. The protein resides in the chloroplast. Functionally, this protein binds to 23S ribosomal RNA in the presence of protein L20. The polypeptide is Large ribosomal subunit protein bL21c (RPL21) (Arabidopsis thaliana (Mouse-ear cress)).